The following is a 213-amino-acid chain: ATP synthase peripheral stalk subunit OSCP, mitochondrial (213 aa).

A mitochondrion-targeting transit peptide spans 1-23 (MASQAVSGLSRQVRCFSTSVVRP). Residues 5 to 23 (AVSGLSRQVRCFSTSVVRP) carry the SIFI-degron motif. N6-acetyllysine is present on residues Lys54, Lys60, Lys70, and Lys73. Lys90 is modified (N6-succinyllysine). N6-acetyllysine; alternate occurs at positions 100, 158, and 162. Residues Lys100, Lys158, and Lys162 each carry the N6-succinyllysine; alternate modification. N6-acetyllysine occurs at positions 172, 176, and 192. At Lys199 the chain carries N6-succinyllysine.

Belongs to the ATPase delta chain family. Component of the ATP synthase complex composed at least of ATP5F1A/subunit alpha, ATP5F1B/subunit beta, ATP5MC1/subunit c (homooctomer), MT-ATP6/subunit a, MT-ATP8/subunit 8, ATP5ME/subunit e, ATP5MF/subunit f, ATP5MG/subunit g, ATP5MK/subunit k, ATP5MJ/subunit j, ATP5F1C/subunit gamma, ATP5F1D/subunit delta, ATP5F1E/subunit epsilon, ATP5PF/subunit F6, ATP5PB/subunit b, ATP5PD/subunit d, ATP5PO/subunit OSCP. ATP synthase complex consists of a soluble F(1) head domain (subunits alpha(3) and beta(3)) - the catalytic core - and a membrane F(0) domain - the membrane proton channel (subunits c, a, 8, e, f, g, k and j). These two domains are linked by a central stalk (subunits gamma, delta, and epsilon) rotating inside the F1 region and a stationary peripheral stalk (subunits F6, b, d, and OSCP). Post-translationally, acetylation at Lys-162 decreases ATP production. Deacetylated by SIRT3. In response to mitochondrial stress, the precursor protein is ubiquitinated by the SIFI complex in the cytoplasm before mitochondrial import, leading to its degradation. Within the SIFI complex, UBR4 initiates ubiquitin chain that are further elongated or branched by KCMF1.

The protein resides in the mitochondrion. Its subcellular location is the mitochondrion inner membrane. Functionally, subunit OSCP, of the mitochondrial membrane ATP synthase complex (F(1)F(0) ATP synthase or Complex V) that produces ATP from ADP in the presence of a proton gradient across the membrane which is generated by electron transport complexes of the respiratory chain. ATP synthase complex consist of a soluble F(1) head domain - the catalytic core - and a membrane F(1) domain - the membrane proton channel. These two domains are linked by a central stalk rotating inside the F(1) region and a stationary peripheral stalk. During catalysis, ATP synthesis in the catalytic domain of F(1) is coupled via a rotary mechanism of the central stalk subunits to proton translocation. In vivo, can only synthesize ATP although its ATP hydrolase activity can be activated artificially in vitro. Part of the complex F(0) domain. Part of the complex F(0) domain and the peripheric stalk, which acts as a stator to hold the catalytic alpha(3)beta(3) subcomplex and subunit a/ATP6 static relative to the rotary elements. In Sus scrofa (Pig), this protein is ATP synthase peripheral stalk subunit OSCP, mitochondrial.